The chain runs to 566 residues: Glucose-6-phosphate isomerase, cytosolic (566 aa).

The active-site Proton donor is Glu360. Catalysis depends on residues His391 and Lys516.

It belongs to the GPI family. Homodimer.

The protein localises to the cytoplasm. The catalysed reaction is alpha-D-glucose 6-phosphate = beta-D-fructose 6-phosphate. Its pathway is carbohydrate degradation; glycolysis; D-glyceraldehyde 3-phosphate and glycerone phosphate from D-glucose: step 2/4. In Spinacia oleracea (Spinach), this protein is Glucose-6-phosphate isomerase, cytosolic (PGIC).